The following is a 261-amino-acid chain: Early 39 kDa protein (261 aa).

The interval 215 to 261 is disordered; that stretch reads SYVPTPVSNKKRRAPPSAPKKIAKQRRDTKPPPTYVSDNTQDTNMSE. The segment covering 250–261 has biased composition (polar residues); the sequence is VSDNTQDTNMSE.

The sequence is that of Early 39 kDa protein from Orgyia pseudotsugata multicapsid polyhedrosis virus (OpMNPV).